The following is a 231-amino-acid chain: Sec-independent protein translocase protein TatB (231 aa).

A helical transmembrane segment spans residues 1-21; sequence MFDIGFSELLLFGVIALIVLG. The interval 77-168 is disordered; it reads MRREMAEMRG…SLKTDFNDNA (92 aa). Residues 101-111 show a composition bias toward basic and acidic residues; sequence ASRDLVDDAKP. Residues 148 to 157 are compositionally biased toward polar residues; the sequence is SEQPSAQGDN.

This sequence belongs to the TatB family. As to quaternary structure, the Tat system comprises two distinct complexes: a TatABC complex, containing multiple copies of TatA, TatB and TatC subunits, and a separate TatA complex, containing only TatA subunits. Substrates initially bind to the TatABC complex, which probably triggers association of the separate TatA complex to form the active translocon.

It localises to the cell inner membrane. Part of the twin-arginine translocation (Tat) system that transports large folded proteins containing a characteristic twin-arginine motif in their signal peptide across membranes. Together with TatC, TatB is part of a receptor directly interacting with Tat signal peptides. TatB may form an oligomeric binding site that transiently accommodates folded Tat precursor proteins before their translocation. This Psychrobacter cryohalolentis (strain ATCC BAA-1226 / DSM 17306 / VKM B-2378 / K5) protein is Sec-independent protein translocase protein TatB.